A 278-amino-acid polypeptide reads, in one-letter code: Tryptophan synthase alpha chain (278 aa).

Active-site proton acceptor residues include glutamate 50 and aspartate 61.

Belongs to the TrpA family. In terms of assembly, tetramer of two alpha and two beta chains.

The enzyme catalyses (1S,2R)-1-C-(indol-3-yl)glycerol 3-phosphate + L-serine = D-glyceraldehyde 3-phosphate + L-tryptophan + H2O. It participates in amino-acid biosynthesis; L-tryptophan biosynthesis; L-tryptophan from chorismate: step 5/5. Functionally, the alpha subunit is responsible for the aldol cleavage of indoleglycerol phosphate to indole and glyceraldehyde 3-phosphate. The chain is Tryptophan synthase alpha chain from Rhodopseudomonas palustris (strain HaA2).